The chain runs to 387 residues: GTP-binding protein 10 (387 aa).

The Obg domain maps to 13-148 (GNFIDNLRLF…RVIHLDLKLI (136 aa)). In terms of domain architecture, OBG-type G spans 149 to 344 (ADIGLVGFPN…LKNCIRKSLD (196 aa)). GTP is bound by residues 155–162 (GFPNAGKS), 202–206 (DLPGL), and 278–281 (NKMD).

This sequence belongs to the TRAFAC class OBG-HflX-like GTPase superfamily. OBG GTPase family.

It is found in the nucleus. It localises to the nucleolus. May be involved in the ribosome maturation process. The polypeptide is GTP-binding protein 10 (GTPBP10) (Bos taurus (Bovine)).